The following is a 276-amino-acid chain: Glutamate 5-kinase (276 aa).

Position 14 (K14) interacts with ATP. Substrate is bound by residues S54, D141, and N157. ATP is bound by residues 177 to 178 and 219 to 225; these read SD and TGGMLTK.

The protein belongs to the glutamate 5-kinase family.

The protein localises to the cytoplasm. The enzyme catalyses L-glutamate + ATP = L-glutamyl 5-phosphate + ADP. Its pathway is amino-acid biosynthesis; L-proline biosynthesis; L-glutamate 5-semialdehyde from L-glutamate: step 1/2. Functionally, catalyzes the transfer of a phosphate group to glutamate to form L-glutamate 5-phosphate. The chain is Glutamate 5-kinase from Listeria welshimeri serovar 6b (strain ATCC 35897 / DSM 20650 / CCUG 15529 / CIP 8149 / NCTC 11857 / SLCC 5334 / V8).